The sequence spans 154 residues: Pro-corazonin (154 aa).

The signal sequence occupies residues 1-19; sequence MLRLLLLPLFLFTLSMCMG. Gln-20 is modified (pyrrolidone carboxylic acid). Asn-30 bears the Asparagine amide mark. A propeptide spanning residues 70–154 is cleaved from the precursor; that stretch reads LERCLSQLQR…SAEPNVFGKH (85 aa).

Belongs to the corazonin family. As to expression, expression is restricted to 24 neurons in the larval CNS (8 in the brain and 16 in the ventral nerve cord) and 12-16 neurons in the pars lateralis of the adult brain.

The protein resides in the secreted. Cardioactive peptide. Corazonin is probably involved in the physiological regulation of the heart beat. Clock (Clk) and cycle (cyc) proteins negatively regulate Crz transcription in a cell-specific manner. The polypeptide is Pro-corazonin (Crz) (Drosophila simulans (Fruit fly)).